We begin with the raw amino-acid sequence, 300 residues long: Tubulin polyglutamylase complex subunit 2 (300 aa).

The segment at 257–300 (KIVIPKKKGPVQPAGGQKGPSGPSGPSTSSTSKSSSGSGNPTRK) is disordered. The segment covering 276 to 300 (PSGPSGPSTSSTSKSSSGSGNPTRK) has biased composition (low complexity).

As to quaternary structure, part of the neuronal tubulin polyglutamylase complex which contains TPGS1, TPGS2, TTLL1, LRRC49 and NICN1. Interacts with CSTPP1 and LRRC49.

Its subcellular location is the cytoplasm. The protein localises to the cytoskeleton. It localises to the microtubule organizing center. It is found in the centrosome. The protein resides in the centriolar satellite. Its function is as follows. Subunit of the tubulin polyglutamylase complex (TPGC). The complex mediates cilia and flagella polyglutamylation which is essential for their biogenesis and motility. This Homo sapiens (Human) protein is Tubulin polyglutamylase complex subunit 2 (TPGS2).